The primary structure comprises 454 residues: Kynurenine--oxoglutarate transaminase 3 (454 aa).

Gly-71 lines the substrate pocket. Lys-116 bears the N6-acetyllysine; alternate mark. Lys-116 carries the post-translational modification N6-succinyllysine; alternate. A substrate-binding site is contributed by Asn-218. Lys-280 carries the N6-(pyridoxal phosphate)lysine modification. A substrate-binding site is contributed by Arg-429.

It belongs to the class-I pyridoxal-phosphate-dependent aminotransferase family. Homodimer. The cofactor is pyridoxal 5'-phosphate.

It carries out the reaction L-kynurenine + 2-oxoglutarate = kynurenate + L-glutamate + H2O. It catalyses the reaction L-kynurenine + glyoxylate = kynurenate + glycine + H2O. The enzyme catalyses 3-hydroxy-L-kynurenine + glyoxylate = xanthurenate + glycine + H2O. The catalysed reaction is an S-substituted L-cysteine + H2O = a thiol + pyruvate + NH4(+). Its pathway is amino-acid degradation; L-kynurenine degradation; kynurenate from L-kynurenine: step 1/2. Its function is as follows. Catalyzes the irreversible transamination of the L-tryptophan metabolite L-kynurenine to form kynurenic acid (KA), an intermediate in the tryptophan catabolic pathway which is also a broad spectrum antagonist of the three ionotropic excitatory amino acid receptors among others. May catalyze the beta-elimination of S-conjugates and Se-conjugates of L-(seleno)cysteine, resulting in the cleavage of the C-S or C-Se bond. Has transaminase activity towards L-kynurenine, tryptophan, phenylalanine, serine, cysteine, methionine, histidine, glutamine and asparagine with glyoxylate as an amino group acceptor (in vitro). Has lower activity with 2-oxoglutarate as amino group acceptor (in vitro). The polypeptide is Kynurenine--oxoglutarate transaminase 3 (Rattus norvegicus (Rat)).